A 418-amino-acid polypeptide reads, in one-letter code: UDP-N-acetylglucosamine 1-carboxyvinyltransferase (418 aa).

23-24 contacts phosphoenolpyruvate; it reads KN. Residue R93 participates in UDP-N-acetyl-alpha-D-glucosamine binding. D117 serves as the catalytic Proton donor. D305 and I327 together coordinate UDP-N-acetyl-alpha-D-glucosamine.

The protein belongs to the EPSP synthase family. MurA subfamily.

The protein localises to the cytoplasm. It carries out the reaction phosphoenolpyruvate + UDP-N-acetyl-alpha-D-glucosamine = UDP-N-acetyl-3-O-(1-carboxyvinyl)-alpha-D-glucosamine + phosphate. Its pathway is cell wall biogenesis; peptidoglycan biosynthesis. In terms of biological role, cell wall formation. Adds enolpyruvyl to UDP-N-acetylglucosamine. The protein is UDP-N-acetylglucosamine 1-carboxyvinyltransferase of Corynebacterium jeikeium (strain K411).